Here is a 131-residue protein sequence, read N- to C-terminus: Small ribosomal subunit protein eS17 (131 aa).

The protein belongs to the eukaryotic ribosomal protein eS17 family.

The protein is Small ribosomal subunit protein eS17 (RPS17) of Theileria annulata.